Consider the following 105-residue polypeptide: uncharacterized protein (105 aa).

3 helical membrane-spanning segments follow: residues 14–34 (ILLM…IVAW), 41–61 (ETVC…FAFL), and 80–100 (VGFT…IFTI).

The protein resides in the cell membrane. This is an uncharacterized protein from Treponema pallidum (strain Nichols).